The sequence spans 553 residues: Probable malate:quinone oxidoreductase (553 aa).

The segment covering Q534–P543 has biased composition (low complexity). The tract at residues Q534–L553 is disordered.

This sequence belongs to the MQO family. FAD serves as cofactor.

It carries out the reaction (S)-malate + a quinone = a quinol + oxaloacetate. It participates in carbohydrate metabolism; tricarboxylic acid cycle; oxaloacetate from (S)-malate (quinone route): step 1/1. The polypeptide is Probable malate:quinone oxidoreductase (Citrobacter koseri (strain ATCC BAA-895 / CDC 4225-83 / SGSC4696)).